A 197-amino-acid chain; its full sequence is Nascent polypeptide-associated complex subunit alpha (197 aa).

The span at 1 to 18 shows a compositional bias: basic and acidic residues; the sequence is MTGSTETRHNEKDVKEPQ. The interval 1-30 is disordered; the sequence is MTGSTETRHNEKDVKEPQVDSDADSDNEAI. The segment covering 19–28 has biased composition (acidic residues); it reads VDSDADSDNE. Residues 58 to 123 form the NAC-A/B domain; sequence SRSEKKARKL…AKIEDLTQHA (66 aa). The tract at residues 134–155 is disordered; that stretch reads TREAPQLKTVEEDDNEDVEEDS. Residues 144–155 show a composition bias toward acidic residues; the sequence is EEDDNEDVEEDS. Positions 158 to 195 constitute a UBA domain; sequence IEEKDIELVISQANTTRNKAIRALKDADNDIVNAIMSL.

Belongs to the NAC-alpha family.

In terms of biological role, may promote appropriate targeting of ribosome-nascent polypeptide complexes. The protein is Nascent polypeptide-associated complex subunit alpha of Caenorhabditis briggsae.